A 242-amino-acid polypeptide reads, in one-letter code: Adenosine 5'-phosphosulfate reductase (242 aa).

The [4Fe-4S] cluster site is built by cysteine 125, cysteine 126, cysteine 208, and cysteine 211. Catalysis depends on cysteine 234, which acts as the Nucleophile; cysteine thiosulfonate intermediate.

This sequence belongs to the PAPS reductase family. CysH subfamily. [4Fe-4S] cluster is required as a cofactor.

Its subcellular location is the cytoplasm. It carries out the reaction [thioredoxin]-disulfide + sulfite + AMP + 2 H(+) = adenosine 5'-phosphosulfate + [thioredoxin]-dithiol. The protein operates within sulfur metabolism; hydrogen sulfide biosynthesis; sulfite from sulfate. In terms of biological role, catalyzes the formation of sulfite from adenosine 5'-phosphosulfate (APS) using thioredoxin as an electron donor. In Staphylococcus saprophyticus subsp. saprophyticus (strain ATCC 15305 / DSM 20229 / NCIMB 8711 / NCTC 7292 / S-41), this protein is Adenosine 5'-phosphosulfate reductase.